The primary structure comprises 448 residues: Probable glycine dehydrogenase (decarboxylating) subunit 1 (448 aa).

This sequence belongs to the GcvP family. N-terminal subunit subfamily. The glycine cleavage system is composed of four proteins: P, T, L and H. In this organism, the P 'protein' is a heterodimer of two subunits.

The catalysed reaction is N(6)-[(R)-lipoyl]-L-lysyl-[glycine-cleavage complex H protein] + glycine + H(+) = N(6)-[(R)-S(8)-aminomethyldihydrolipoyl]-L-lysyl-[glycine-cleavage complex H protein] + CO2. Functionally, the glycine cleavage system catalyzes the degradation of glycine. The P protein binds the alpha-amino group of glycine through its pyridoxal phosphate cofactor; CO(2) is released and the remaining methylamine moiety is then transferred to the lipoamide cofactor of the H protein. This chain is Probable glycine dehydrogenase (decarboxylating) subunit 1, found in Listeria innocua serovar 6a (strain ATCC BAA-680 / CLIP 11262).